A 572-amino-acid polypeptide reads, in one-letter code: Probable terpene synthase 11 (572 aa).

3 residues coordinate Mg(2+): D317, D321, and E469. Positions 317–321 (DDIFD) match the DDXXD motif motif.

Belongs to the terpene synthase family. The cofactor is Mg(2+).

Probable sesquiterpene synthase. This is Probable terpene synthase 11 (TPS11) from Ricinus communis (Castor bean).